A 326-amino-acid polypeptide reads, in one-letter code: Acyl-CoA-binding domain-containing protein 4 (326 aa).

The ACB domain occupies 10 to 99 (CQKQFQAAVS…MKLVAQKVID (90 aa)). Residues 21-30 (IQNLPKNGSY), 41-45 (YSYYK), Lys-67, and Tyr-86 contribute to the an acyl-CoA site. Disordered regions lie at residues 147 to 170 (VQAAPEPSHPPKEPAPPSPESRLP) and 223 to 248 (KEAAGRELTTRSSPESPEGFGGSLMG). A Phosphoserine modification is found at Ser-164.

Its function is as follows. Binds medium- and long-chain acyl-CoA esters and may function as an intracellular carrier of acyl-CoA esters. In Rattus norvegicus (Rat), this protein is Acyl-CoA-binding domain-containing protein 4 (Acbd4).